Reading from the N-terminus, the 387-residue chain is 3-ketoacyl-CoA thiolase (387 aa).

Cys-91 functions as the Acyl-thioester intermediate in the catalytic mechanism. Active-site proton acceptor residues include His-343 and Cys-373.

This sequence belongs to the thiolase-like superfamily. Thiolase family. In terms of assembly, heterotetramer of two alpha chains (FadB) and two beta chains (FadA).

Its subcellular location is the cytoplasm. It carries out the reaction an acyl-CoA + acetyl-CoA = a 3-oxoacyl-CoA + CoA. It functions in the pathway lipid metabolism; fatty acid beta-oxidation. In terms of biological role, catalyzes the final step of fatty acid oxidation in which acetyl-CoA is released and the CoA ester of a fatty acid two carbons shorter is formed. The chain is 3-ketoacyl-CoA thiolase from Escherichia fergusonii (strain ATCC 35469 / DSM 13698 / CCUG 18766 / IAM 14443 / JCM 21226 / LMG 7866 / NBRC 102419 / NCTC 12128 / CDC 0568-73).